Consider the following 389-residue polypeptide: Exodeoxyribonuclease 7 large subunit (389 aa).

This sequence belongs to the XseA family. In terms of assembly, heterooligomer composed of large and small subunits.

It is found in the cytoplasm. The enzyme catalyses Exonucleolytic cleavage in either 5'- to 3'- or 3'- to 5'-direction to yield nucleoside 5'-phosphates.. Its function is as follows. Bidirectionally degrades single-stranded DNA into large acid-insoluble oligonucleotides, which are then degraded further into small acid-soluble oligonucleotides. This Pseudothermotoga lettingae (strain ATCC BAA-301 / DSM 14385 / NBRC 107922 / TMO) (Thermotoga lettingae) protein is Exodeoxyribonuclease 7 large subunit.